Here is a 329-residue protein sequence, read N- to C-terminus: Biotin synthase (329 aa).

The 230-residue stretch at 46-275 folds into the Radical SAM core domain; it reads FFGRRLKLVR…LNPKAELRAS (230 aa). 3 residues coordinate [4Fe-4S] cluster: Cys-64, Cys-68, and Cys-71. The [2Fe-2S] cluster site is built by Cys-108, Cys-140, Cys-200, and Arg-273.

The protein belongs to the radical SAM superfamily. Biotin synthase family. In terms of assembly, homodimer. [4Fe-4S] cluster serves as cofactor. [2Fe-2S] cluster is required as a cofactor.

The enzyme catalyses (4R,5S)-dethiobiotin + (sulfur carrier)-SH + 2 reduced [2Fe-2S]-[ferredoxin] + 2 S-adenosyl-L-methionine = (sulfur carrier)-H + biotin + 2 5'-deoxyadenosine + 2 L-methionine + 2 oxidized [2Fe-2S]-[ferredoxin]. Its pathway is cofactor biosynthesis; biotin biosynthesis; biotin from 7,8-diaminononanoate: step 2/2. Its function is as follows. Catalyzes the conversion of dethiobiotin (DTB) to biotin by the insertion of a sulfur atom into dethiobiotin via a radical-based mechanism. The sequence is that of Biotin synthase from Thermus thermophilus (strain ATCC BAA-163 / DSM 7039 / HB27).